A 304-amino-acid chain; its full sequence is Calmodulin-lysine N-methyltransferase (304 aa).

It belongs to the class I-like SAM-binding methyltransferase superfamily. CLNMT methyltransferase family. In terms of assembly, monomer. Expressed in discreet spatial and tissue-specific patterns including root tips, leaves-tips, floral buds, stamens, hydathodes, stigma, anther, siliques, apical meristems and germinating seeds. Also observed at high levels in the root stele region.

Its subcellular location is the cytoplasm. It is found in the nucleus. It catalyses the reaction [calmodulin]-L-lysine + S-adenosyl-L-methionine = [calmodulin]-N(6)-methyl-L-lysine + S-adenosyl-L-homocysteine + H(+). Catalyzes the trimethylation of calmodulin. Regulates roots development probably by modulating auxin signaling responses. May be involved in gravitropism. Involved in abscisic acid (ABA)-mediated and abiotic stress responses, including salt (NaCl), cold, drought and heat stresses. The sequence is that of Calmodulin-lysine N-methyltransferase from Arabidopsis thaliana (Mouse-ear cress).